Consider the following 87-residue polypeptide: Exendin-4 (87 aa).

Positions 1–23 (MKIILWLCVFGLFLATLFPISWQ) are cleaved as a signal peptide. A propeptide spanning residues 24 to 45 (MPVESGLSSEDSASSESFASKI) is cleaved from the precursor. At Ser86 the chain carries Serine amide.

It belongs to the glucagon family. In terms of tissue distribution, expressed by the venom gland.

The protein localises to the secreted. In terms of biological role, venom protein that mimics the incretin hormone glucagon-like peptide 1 (GLP-1). It stimulates insulin synthesis and secretion, protects against beta-cell apoptosis in response to different insults, and promotes beta-cell proliferation It also promotes satiety, reduces food intake, reduces fat deposition, reduces body weight and inhibits gastric emptying. Interacts with GLP-1 receptor (GLP1R). Induces hypotension that is mediated by relaxation of cardiac smooth muscle. The polypeptide is Exendin-4 (Heloderma suspectum cinctum (Banded Gila monster)).